We begin with the raw amino-acid sequence, 477 residues long: Glycogen synthase (477 aa).

K16 contacts ADP-alpha-D-glucose.

It belongs to the glycosyltransferase 1 family. Bacterial/plant glycogen synthase subfamily.

The enzyme catalyses [(1-&gt;4)-alpha-D-glucosyl](n) + ADP-alpha-D-glucose = [(1-&gt;4)-alpha-D-glucosyl](n+1) + ADP + H(+). Its pathway is glycan biosynthesis; glycogen biosynthesis. Synthesizes alpha-1,4-glucan chains using ADP-glucose. The polypeptide is Glycogen synthase (Oceanobacillus iheyensis (strain DSM 14371 / CIP 107618 / JCM 11309 / KCTC 3954 / HTE831)).